A 508-amino-acid chain; its full sequence is Endo-4-O-sulfatase (508 aa).

A 3-oxoalanine (Ser) modification is found at S84.

This sequence belongs to the sulfatase family. Post-translationally, the conversion to 3-oxoalanine (also known as C-formylglycine, FGly), of a serine or cysteine residue in prokaryotes and of a cysteine residue in eukaryotes, is critical for catalytic activity.

Its function is as follows. Endosulfatase involved in the degradation of the glycosaminoglycans (GAGs) chondroitin sulfate (CS) and dermatan sulfate (DS). Efficiently hydrolyzes sulfate groups from a broad range of substrate size, including disaccharide to high molecular weight CS and DS polymers. Has a strict specificity for the 4-O-sulfate groups of galactosamine. GAG-specific sulfatases play a key role in the persistence of the major human gut symbiont B.thetaiotaomicron in the host gastrointestinal tract. This chain is Endo-4-O-sulfatase, found in Bacteroides thetaiotaomicron (strain ATCC 29148 / DSM 2079 / JCM 5827 / CCUG 10774 / NCTC 10582 / VPI-5482 / E50).